Consider the following 823-residue polypeptide: Leucine--tRNA ligase (823 aa).

Residues 42–52 (PYPSGTLHMGH) carry the 'HIGH' region motif. A 'KMSKS' region motif is present at residues 575–579 (KMSKS). Position 578 (Lys-578) interacts with ATP.

Belongs to the class-I aminoacyl-tRNA synthetase family.

The protein localises to the cytoplasm. It catalyses the reaction tRNA(Leu) + L-leucine + ATP = L-leucyl-tRNA(Leu) + AMP + diphosphate. This chain is Leucine--tRNA ligase, found in Legionella pneumophila (strain Corby).